A 275-amino-acid chain; its full sequence is 2-C-methyl-D-erythritol 4-phosphate cytidylyltransferase (275 aa).

Belongs to the IspD/TarI cytidylyltransferase family. IspD subfamily.

It carries out the reaction 2-C-methyl-D-erythritol 4-phosphate + CTP + H(+) = 4-CDP-2-C-methyl-D-erythritol + diphosphate. The protein operates within isoprenoid biosynthesis; isopentenyl diphosphate biosynthesis via DXP pathway; isopentenyl diphosphate from 1-deoxy-D-xylulose 5-phosphate: step 2/6. Its function is as follows. Catalyzes the formation of 4-diphosphocytidyl-2-C-methyl-D-erythritol from CTP and 2-C-methyl-D-erythritol 4-phosphate (MEP). This chain is 2-C-methyl-D-erythritol 4-phosphate cytidylyltransferase, found in Corynebacterium jeikeium (strain K411).